Consider the following 188-residue polypeptide: Elongation factor P (188 aa).

Lysine 34 carries the N6-(3,6-diaminohexanoyl)-5-hydroxylysine modification.

This sequence belongs to the elongation factor P family. May be beta-lysylated on the epsilon-amino group of Lys-34 by the combined action of EpmA and EpmB, and then hydroxylated on the C5 position of the same residue by EpmC (if this protein is present). Lysylation is critical for the stimulatory effect of EF-P on peptide-bond formation. The lysylation moiety may extend toward the peptidyltransferase center and stabilize the terminal 3-CCA end of the tRNA. Hydroxylation of the C5 position on Lys-34 may allow additional potential stabilizing hydrogen-bond interactions with the P-tRNA.

It is found in the cytoplasm. It participates in protein biosynthesis; polypeptide chain elongation. Functionally, involved in peptide bond synthesis. Alleviates ribosome stalling that occurs when 3 or more consecutive Pro residues or the sequence PPG is present in a protein, possibly by augmenting the peptidyl transferase activity of the ribosome. Modification of Lys-34 is required for alleviation. This chain is Elongation factor P, found in Methylococcus capsulatus (strain ATCC 33009 / NCIMB 11132 / Bath).